The sequence spans 68 residues: UPF0253 protein VF_0662 (68 aa).

Belongs to the UPF0253 family.

In Aliivibrio fischeri (strain ATCC 700601 / ES114) (Vibrio fischeri), this protein is UPF0253 protein VF_0662.